Here is a 249-residue protein sequence, read N- to C-terminus: NAD kinase (249 aa).

Catalysis depends on Asp45, which acts as the Proton acceptor. Residues 45-46 (DG), Arg50, 110-111 (NE), Asp138, and 149-154 (SGWGMS) contribute to the NAD(+) site.

It belongs to the NAD kinase family. The cofactor is a divalent metal cation.

The protein localises to the cytoplasm. The catalysed reaction is NAD(+) + ATP = ADP + NADP(+) + H(+). Functionally, involved in the regulation of the intracellular balance of NAD and NADP, and is a key enzyme in the biosynthesis of NADP. Catalyzes specifically the phosphorylation on 2'-hydroxyl of the adenosine moiety of NAD to yield NADP. The protein is NAD kinase of Saccharolobus solfataricus (strain ATCC 35092 / DSM 1617 / JCM 11322 / P2) (Sulfolobus solfataricus).